Consider the following 118-residue polypeptide: Autophagy-related protein 8 (118 aa).

Gly116 is lipidated: Phosphatidylethanolamine amidated glycine. A propeptide spans 117–118 (removed in mature form); the sequence is SI.

Belongs to the ATG8 family. Conjugation to phosphatidylethanolamine (PE) leads to homodimerization. Interacts with ATG1, ATG3, ATG4, ATG7 and ATG12. Post-translationally, the C-terminal Ser-117 and Ile-118 residues of ATG8 are removed by ATG4 to expose Gly-116 at the C-terminus. This Gly-116 forms then a thioester bond with ATG7 (E1-like activating enzyme) before being transferred to ATG3 (the specific E2 conjugating enzyme), in order to be finally amidated with phosphatidylethanolamine. This lipid modification anchors ATG8 to membranes and can be reversed by ATG4, releasing soluble ATG8.

The protein localises to the cytoplasmic vesicle. It is found in the cvt vesicle membrane. The protein resides in the autophagosome membrane. Its subcellular location is the vacuole membrane. Its function is as follows. Ubiquitin-like modifier involved in cytoplasm to vacuole transport (Cvt) vesicles and autophagosome formation. With ATG4, mediates the delivery of the vesicles and autophagosomes to the vacuole via the microtubule cytoskeleton. Required for selective autophagic degradation of the nucleus (nucleophagy) as well as for mitophagy which contributes to regulate mitochondrial quantity and quality by eliminating the mitochondria to a basal level to fulfill cellular energy requirements and preventing excess ROS production. Also participates in membrane fusion events that take place in the early secretory pathway. Also involved in endoplasmic reticulum-specific autophagic process and is essential for the survival of cells subjected to severe ER stress. The ATG8-PE conjugate mediates tethering between adjacent membranes and stimulates membrane hemifusion, leading to expansion of the autophagosomal membrane during autophagy. Moreover not only conjugation, but also subsequent ATG8-PE deconjugation is an important step required to facilitate multiple events during macroautophagy, and especially for efficient autophagosome biogenesis, the assembly of ATG9-containing tubulovesicular clusters into phagophores/autophagosomes, and for the disassembly of PAS-associated ATG components. Contributes to conidiation by regulating the conidial levels of the conidiation-related protein CP15 and mediates fungal oxidation resistance by controlling total superoxide dismutase (SOD) activity. The protein is Autophagy-related protein 8 of Beauveria bassiana (strain ARSEF 2860) (White muscardine disease fungus).